The primary structure comprises 606 residues: UvrABC system protein C (606 aa).

Residues 19–97 (QSCGVYQMIG…IKSLKPPYNI (79 aa)) enclose the GIY-YIG domain. One can recognise a UVR domain in the interval 207–242 (EKVKKQLSSTMEKCSKEENYELAAIYRDRLKFLEQI).

This sequence belongs to the UvrC family. In terms of assembly, interacts with UvrB in an incision complex.

It localises to the cytoplasm. Functionally, the UvrABC repair system catalyzes the recognition and processing of DNA lesions. UvrC both incises the 5' and 3' sides of the lesion. The N-terminal half is responsible for the 3' incision and the C-terminal half is responsible for the 5' incision. This chain is UvrABC system protein C, found in Wolbachia sp. subsp. Brugia malayi (strain TRS).